The primary structure comprises 111 residues: Large ribosomal subunit protein uL22 (111 aa).

The protein belongs to the universal ribosomal protein uL22 family. In terms of assembly, part of the 50S ribosomal subunit.

In terms of biological role, this protein binds specifically to 23S rRNA; its binding is stimulated by other ribosomal proteins, e.g. L4, L17, and L20. It is important during the early stages of 50S assembly. It makes multiple contacts with different domains of the 23S rRNA in the assembled 50S subunit and ribosome. Its function is as follows. The globular domain of the protein is located near the polypeptide exit tunnel on the outside of the subunit, while an extended beta-hairpin is found that lines the wall of the exit tunnel in the center of the 70S ribosome. In Geotalea uraniireducens (strain Rf4) (Geobacter uraniireducens), this protein is Large ribosomal subunit protein uL22.